Consider the following 85-residue polypeptide: Mitochondrial protein pet191 homolog (85 aa).

One can recognise a CHCH domain in the interval 18 to 61; sequence HSDCMFVKKKSARECLKNKDELPEECKNLIEAYGECKRQMLDMT. The Cx10C motif motif lies at 21-32; it reads CMFVKKKSAREC. Intrachain disulfides connect Cys-21/Cys-53 and Cys-32/Cys-43. Residues 43 to 53 carry the Cx9C motif motif; that stretch reads CKNLIEAYGEC. Residues 65 to 85 form a disordered region; that stretch reads RIAPEKNTDQDTEKPSNVDEQ.

It belongs to the PET191 family.

It is found in the mitochondrion. Its function is as follows. Involved in the assembly of cytochrome c oxidase. This chain is Mitochondrial protein pet191 homolog, found in Schizosaccharomyces pombe (strain 972 / ATCC 24843) (Fission yeast).